The chain runs to 257 residues: uncharacterized protein (257 aa).

Position 7–14 (7–14 (GKGGVGKT)) interacts with ATP.

To M.jannaschii MJ0084 and MJ0685.

This is an uncharacterized protein from Methanocaldococcus jannaschii (strain ATCC 43067 / DSM 2661 / JAL-1 / JCM 10045 / NBRC 100440) (Methanococcus jannaschii).